Consider the following 165-residue polypeptide: Glycosyl-4,4'-diaponeurosporenoate acyltransferase (165 aa).

The first 28 residues, 1–28 (MKTMKKYIKTAFFCSMYWLIVQLNIANL), serve as a signal peptide directing secretion. Residues 126–145 (YINIFYAMIANVPIIIVQRY) traverse the membrane as a helical segment.

Belongs to the acyltransferase CrtO family.

The protein resides in the cell membrane. It participates in carotenoid biosynthesis; staphyloxanthin biosynthesis; staphyloxanthin from farnesyl diphosphate: step 5/5. Catalyzes the acylation of glycosyl-4,4'-diaponeurosporenoate, i.e. the esterification of glucose at the C6'' position with the carboxyl group of the C(15) fatty acid 12-methyltetradecanoic acid, to yield staphyloxanthin. This is the last step in the biosynthesis of this orange pigment, present in most staphylococci strains. The polypeptide is Glycosyl-4,4'-diaponeurosporenoate acyltransferase (crtO) (Staphylococcus aureus (strain Newman)).